The chain runs to 388 residues: Chalcone synthase DIV (388 aa).

C164 is an active-site residue.

The protein belongs to the thiolase-like superfamily. Chalcone/stilbene synthases family.

It catalyses the reaction (E)-4-coumaroyl-CoA + 3 malonyl-CoA + 3 H(+) = 2',4,4',6'-tetrahydroxychalcone + 3 CO2 + 4 CoA. Its pathway is secondary metabolite biosynthesis; flavonoid biosynthesis. The primary product of this enzyme is 4,2',4',6'-tetrahydroxychalcone (also termed naringenin-chalcone or chalcone) which can under specific conditions spontaneously isomerize into naringenin. This is Chalcone synthase DIV (CHS-DIV) from Ipomoea batatas (Sweet potato).